We begin with the raw amino-acid sequence, 209 residues long: Ephrin-A2 (209 aa).

An N-terminal signal peptide occupies residues 1-20 (MAPAQRPLLPLLLLLLPLRA). One can recognise an Ephrin RBD domain in the interval 30-170 (ADRYAVYWNR…RLKVYVRPTN (141 aa)). Asparagine 38 is a glycosylation site (N-linked (GlcNAc...) asparagine). Disulfide bonds link cysteine 69–cysteine 110 and cysteine 98–cysteine 159. 2 N-linked (GlcNAc...) asparagine glycosylation sites follow: asparagine 170 and asparagine 184. A lipid anchor (GPI-anchor amidated asparagine) is attached at asparagine 184. The propeptide at 185–209 (SSCSGLGGCHLFLTTVPVLWSLLGS) is removed in mature form.

Belongs to the ephrin family. Binds to the receptor tyrosine kinases EPHA3, EPHA4 and EPHA5. Interacts with EPHA8; activates EPHA8. Expressed in myogenic progenitor cells.

It localises to the cell membrane. Cell surface GPI-bound ligand for Eph receptors, a family of receptor tyrosine kinases which are crucial for migration, repulsion and adhesion during neuronal, vascular and epithelial development. Binds promiscuously Eph receptors residing on adjacent cells, leading to contact-dependent bidirectional signaling into neighboring cells. The signaling pathway downstream of the receptor is referred to as forward signaling while the signaling pathway downstream of the ephrin ligand is referred to as reverse signaling. With the EPHA2 receptor may play a role in bone remodeling through regulation of osteoclastogenesis and osteoblastogenesis. This chain is Ephrin-A2 (Efna2), found in Mus musculus (Mouse).